A 360-amino-acid polypeptide reads, in one-letter code: GTPase Obg (360 aa).

Positions 1 to 156 (MFVDSVEIII…KCVRLELKLI (156 aa)) constitute an Obg domain. An OBG-type G domain is found at 157 to 360 (ADIGLVGFPN…LKFVLLEALP (204 aa)). GTP is bound by residues 163–170 (GFPNAGKS), 188–192 (FTTLV), 210–213 (DIPG), 279–282 (NKCD), and 341–343 (SAV). Ser170 and Thr190 together coordinate Mg(2+).

It belongs to the TRAFAC class OBG-HflX-like GTPase superfamily. OBG GTPase family. Monomer. Mg(2+) is required as a cofactor.

Its subcellular location is the cytoplasm. Its function is as follows. An essential GTPase which binds GTP, GDP and possibly (p)ppGpp with moderate affinity, with high nucleotide exchange rates and a fairly low GTP hydrolysis rate. Plays a role in control of the cell cycle, stress response, ribosome biogenesis and in those bacteria that undergo differentiation, in morphogenesis control. In Helicobacter pylori (strain HPAG1), this protein is GTPase Obg.